The following is a 458-amino-acid chain: L-hydantoinase (458 aa).

Zn(2+) contacts are provided by His60, His62, Lys147, His183, His239, and Asp312. Lys147 carries the post-translational modification N6-carboxylysine.

Homotetramer. Requires Zn(2+) as cofactor. In terms of processing, carboxylation allows a single lysine to coordinate two zinc ions.

Functionally, rather more predominant for the cleavage of aryl- than for alkyl-hydantoin derivatives. The stereoselectivity of this enzyme depends on the substrate used for bioconversion: strictly L-selective for the cleavage of D,L-5-indolylmethylhydantoin, but D-selective for the hydrolysis of D,L-methylthioethylhydantoin. This Paenarthrobacter aurescens (Arthrobacter aurescens) protein is L-hydantoinase (lhyD).